Reading from the N-terminus, the 506-residue chain is Maturase K (506 aa).

Belongs to the intron maturase 2 family. MatK subfamily.

It is found in the plastid. It localises to the chloroplast. Functionally, usually encoded in the trnK tRNA gene intron. Probably assists in splicing its own and other chloroplast group II introns. In Trifolium hirtum (Rose clover), this protein is Maturase K.